A 210-amino-acid chain; its full sequence is Cdc42 effector protein 2 (210 aa).

S2 is modified (N-acetylserine). The CRIB domain maps to 30–44 (ISPPLGDFRHTIHIG). 3 positions are modified to phosphoserine: S31, S101, and S141. A disordered region spans residues 124 to 145 (AQAPPKPPRLHLETPQASPQEA).

It belongs to the BORG/CEP family. In terms of assembly, interacts with CDC42 and RHOQ, in a GTP-dependent manner, and with SEPT7.

The protein localises to the endomembrane system. Its subcellular location is the cytoplasm. It localises to the cytoskeleton. Its function is as follows. Probably involved in the organization of the actin cytoskeleton. May act downstream of CDC42 to induce actin filament assembly leading to cell shape changes. Induces pseudopodia formation in fibroblasts in a CDC42-dependent manner. The polypeptide is Cdc42 effector protein 2 (CDC42EP2) (Bos taurus (Bovine)).